The primary structure comprises 386 residues: uncharacterized protein (386 aa).

K185 carries the N6-(pyridoxal phosphate)lysine modification.

It belongs to the DegT/DnrJ/EryC1 family. Pyridoxal 5'-phosphate serves as cofactor.

This is an uncharacterized protein from Methanocaldococcus jannaschii (strain ATCC 43067 / DSM 2661 / JAL-1 / JCM 10045 / NBRC 100440) (Methanococcus jannaschii).